We begin with the raw amino-acid sequence, 255 residues long: 5-oxoprolinase subunit A (255 aa).

Belongs to the LamB/PxpA family. Forms a complex composed of PxpA, PxpB and PxpC.

It carries out the reaction 5-oxo-L-proline + ATP + 2 H2O = L-glutamate + ADP + phosphate + H(+). Functionally, catalyzes the cleavage of 5-oxoproline to form L-glutamate coupled to the hydrolysis of ATP to ADP and inorganic phosphate. The sequence is that of 5-oxoprolinase subunit A from Campylobacter jejuni subsp. jejuni serotype O:6 (strain 81116 / NCTC 11828).